We begin with the raw amino-acid sequence, 84 residues long: Large ribosomal subunit protein bL27 (84 aa).

A disordered region spans residues 1–22 (MAHKKAGGSTRNGRDSESKRLG).

The protein belongs to the bacterial ribosomal protein bL27 family.

This is Large ribosomal subunit protein bL27 from Shewanella sp. (strain MR-4).